Here is a 256-residue protein sequence, read N- to C-terminus: Enoyl-[acyl-carrier-protein] reductase [NADPH] FabI (256 aa).

NADP(+) is bound by residues Gly-13, 19–20 (SI), 40–44 (RKERS), 66–67 (DV), and Ile-94. A substrate-binding site is contributed by Ala-97. Catalysis depends on proton acceptor residues Tyr-147 and Tyr-157. NADP(+) is bound by residues Lys-164 and 193–197 (IRTLS).

Belongs to the short-chain dehydrogenases/reductases (SDR) family. FabI subfamily. In terms of assembly, homotetramer.

The catalysed reaction is a 2,3-saturated acyl-[ACP] + NADP(+) = a (2E)-enoyl-[ACP] + NADPH + H(+). It functions in the pathway lipid metabolism; fatty acid biosynthesis. Its activity is regulated as follows. Inhibited by 1,4-disubstituted imidazoles, 1,4-benzodiazepine, naphthyridinone derivatives, triclosan and its diphenyl ether analgues. Catalyzes the reduction of a carbon-carbon double bond in an enoyl moiety that is covalently linked to an acyl carrier protein (ACP). It has a preference for a long chain (C12) substrate compared to the shorter (C4) acyl group. Involved in the elongation cycle of fatty acid which are used in the lipid metabolism. This is Enoyl-[acyl-carrier-protein] reductase [NADPH] FabI (fabI) from Staphylococcus aureus (strain NCTC 8325 / PS 47).